A 248-amino-acid chain; its full sequence is Phosphoribosylformylglycinamidine synthase subunit PurQ (248 aa).

The Glutamine amidotransferase type-1 domain occupies 6-248 (AMVLRMEGTN…IFFRILYNST (243 aa)). The active-site Nucleophile is the Cys-95. Residues His-215 and Glu-217 contribute to the active site.

In terms of assembly, part of the FGAM synthase complex composed of 1 PurL, 1 PurQ and 2 PurS subunits.

The protein localises to the cytoplasm. The enzyme catalyses N(2)-formyl-N(1)-(5-phospho-beta-D-ribosyl)glycinamide + L-glutamine + ATP + H2O = 2-formamido-N(1)-(5-O-phospho-beta-D-ribosyl)acetamidine + L-glutamate + ADP + phosphate + H(+). It catalyses the reaction L-glutamine + H2O = L-glutamate + NH4(+). The protein operates within purine metabolism; IMP biosynthesis via de novo pathway; 5-amino-1-(5-phospho-D-ribosyl)imidazole from N(2)-formyl-N(1)-(5-phospho-D-ribosyl)glycinamide: step 1/2. Part of the phosphoribosylformylglycinamidine synthase complex involved in the purines biosynthetic pathway. Catalyzes the ATP-dependent conversion of formylglycinamide ribonucleotide (FGAR) and glutamine to yield formylglycinamidine ribonucleotide (FGAM) and glutamate. The FGAM synthase complex is composed of three subunits. PurQ produces an ammonia molecule by converting glutamine to glutamate. PurL transfers the ammonia molecule to FGAR to form FGAM in an ATP-dependent manner. PurS interacts with PurQ and PurL and is thought to assist in the transfer of the ammonia molecule from PurQ to PurL. The polypeptide is Phosphoribosylformylglycinamidine synthase subunit PurQ (Picrophilus torridus (strain ATCC 700027 / DSM 9790 / JCM 10055 / NBRC 100828 / KAW 2/3)).